We begin with the raw amino-acid sequence, 1685 residues long: Myomesin-1 (1685 aa).

A disordered region spans residues 33–80; it reads KKRSAVYTQGSTAYSSRSSAAHRRESEAFRRASASSSQQQASQHALSS. 2 stretches are compositionally biased toward low complexity: residues 41-51 and 63-80; these read QGSTAYSSRSS and RASA…ALSS. Ser113 carries the phosphoserine modification. A disordered region spans residues 177 to 244; it reads GITTSKQSTA…TSEKKSRKVV (68 aa). Positions 179 to 220 are enriched in low complexity; the sequence is TTSKQSTASKQTTASKQSTASKQSTASKQSTASRQSTASRQS. Tandem repeats lie at residues 182-187, 188-193, 194-199, 200-205, 206-211, and 212-217. The 6 X 6 AA tandem repeats stretch occupies residues 182–217; the sequence is KQSTASKQTTASKQSTASKQSTASKQSTASRQSTAS. Residues 221-233 show a composition bias toward polar residues; it reads VVSKQATSALQQE. Ig-like C2-type domains follow at residues 277–368 and 396–498; these read PEFI…ASVV and PYGY…AYVF. 3 consecutive Fibronectin type-III domains span residues 512–607, 640–734, and 741–834; these read APLD…ALDP, PPTD…VVGD, and APGK…VKAA. The interval 840 to 938 is disordered; it reads SPDVCPALSD…TDRAPPSPPC (99 aa). Low complexity predominate over residues 874–888; sequence LLGSKPNKPSLPSSS. A phosphoserine mark is found at Ser883 and Ser887. Positions 889 to 902 are enriched in polar residues; that stretch reads QNLGQTEVSKVSET. Basic and acidic residues predominate over residues 920–931; sequence SKSDPLKKKTDR. 2 Fibronectin type-III domains span residues 933–1034 and 1041–1140; these read PPSP…CEEW and PPHS…TRPG. Residue Ser1054 is modified to Phosphoserine. 3 consecutive Ig-like C2-type domains span residues 1132–1230, 1358–1444, and 1573–1662; these read PVVA…EELK, PHFV…LKLV, and RVLG…FTVS. Cys1160 and Cys1210 are disulfide-bonded.

Homodimer. Interacts with TTN/titin. Interacts with PNKD.

The protein localises to the cytoplasm. The protein resides in the myofibril. Its subcellular location is the sarcomere. It is found in the m line. Functionally, major component of the vertebrate myofibrillar M band. Binds myosin, titin, and light meromyosin. This binding is dose dependent. In Homo sapiens (Human), this protein is Myomesin-1 (MYOM1).